Consider the following 87-residue polypeptide: Small ribosomal subunit protein bS20 (87 aa).

The tract at residues 1–26 (MANIKSAKKRAVQSEKARKHNASRRS) is disordered.

The protein belongs to the bacterial ribosomal protein bS20 family.

Functionally, binds directly to 16S ribosomal RNA. The chain is Small ribosomal subunit protein bS20 from Salmonella typhi.